Here is a 377-residue protein sequence, read N- to C-terminus: Alanine racemase (377 aa).

The active-site Proton acceptor; specific for D-alanine is K37. At K37 the chain carries N6-(pyridoxal phosphate)lysine. R135 provides a ligand contact to substrate. Y271 acts as the Proton acceptor; specific for L-alanine in catalysis. M319 provides a ligand contact to substrate.

It belongs to the alanine racemase family. Requires pyridoxal 5'-phosphate as cofactor.

It catalyses the reaction L-alanine = D-alanine. Its pathway is amino-acid biosynthesis; D-alanine biosynthesis; D-alanine from L-alanine: step 1/1. Its function is as follows. Catalyzes the interconversion of L-alanine and D-alanine. May also act on other amino acids. The chain is Alanine racemase (alr) from Helicobacter pylori (strain P12).